We begin with the raw amino-acid sequence, 261 residues long: Small ribosomal subunit protein uS2 (261 aa).

Positions 224–261 (GKQGQDDSEDVEKEMADKAAAENDDEESIEEVVEKSED) are disordered. Acidic residues predominate over residues 245–254 (ENDDEESIEE).

The protein belongs to the universal ribosomal protein uS2 family.

The protein is Small ribosomal subunit protein uS2 of Lactobacillus gasseri (strain ATCC 33323 / DSM 20243 / BCRC 14619 / CIP 102991 / JCM 1131 / KCTC 3163 / NCIMB 11718 / NCTC 13722 / AM63).